The sequence spans 52 residues: ATP synthase protein 8 (52 aa).

The chain crosses the membrane as a helical span at residues 7-27 (MKWFLIYFIYLLIFYLFIMLI).

It belongs to the ATPase protein 8 family. F-type ATPases have 2 components, CF(1) - the catalytic core - and CF(0) - the membrane proton channel.

The protein localises to the mitochondrion membrane. Its function is as follows. Mitochondrial membrane ATP synthase (F(1)F(0) ATP synthase or Complex V) produces ATP from ADP in the presence of a proton gradient across the membrane which is generated by electron transport complexes of the respiratory chain. F-type ATPases consist of two structural domains, F(1) - containing the extramembraneous catalytic core and F(0) - containing the membrane proton channel, linked together by a central stalk and a peripheral stalk. During catalysis, ATP synthesis in the catalytic domain of F(1) is coupled via a rotary mechanism of the central stalk subunits to proton translocation. Part of the complex F(0) domain. Minor subunit located with subunit a in the membrane. The sequence is that of ATP synthase protein 8 (mt:ATPase8) from Apis mellifera ligustica (Common honeybee).